Here is a 342-residue protein sequence, read N- to C-terminus: MREPRFWYPAQRNSVPLAARLLAPLGYVYGLAGRIRRGRAEPQRAAVPVICVGNLTAGGAGKTPVALTLAEGLIAKGEKVHFLTRGYGGREQGPIRVDPLRHAAADVGDEPLLLAAAAPTWVAANRSEGAAAAVRGGAGLIIMDDGFQNPGLAKDFSILVVDAASGVGNGRLVPAGPLRERVDDALSRANALILTGRGHAGDGIAARARARGIPVFNSIVRPAVAPDFGAGPFLAFAGIGRPEKFYRTLRELGAELAETISFPDHHMFSESEALKLLVRARELGARLITTEKDAARLSHAPVSSARWRLDEAALRLPVRALIGDFPSLMAQIDDAVSRARRR.

56 to 63 contacts ATP; the sequence is TAGGAGKT.

It belongs to the LpxK family.

The catalysed reaction is a lipid A disaccharide + ATP = a lipid IVA + ADP + H(+). Its pathway is glycolipid biosynthesis; lipid IV(A) biosynthesis; lipid IV(A) from (3R)-3-hydroxytetradecanoyl-[acyl-carrier-protein] and UDP-N-acetyl-alpha-D-glucosamine: step 6/6. In terms of biological role, transfers the gamma-phosphate of ATP to the 4'-position of a tetraacyldisaccharide 1-phosphate intermediate (termed DS-1-P) to form tetraacyldisaccharide 1,4'-bis-phosphate (lipid IVA). The protein is Tetraacyldisaccharide 4'-kinase of Parvibaculum lavamentivorans (strain DS-1 / DSM 13023 / NCIMB 13966).